The chain runs to 25 residues: Caerin-1.6 (25 aa).

Residue leucine 25 is modified to Leucine amide.

Belongs to the frog skin active peptide (FSAP) family. Caerin subfamily. Expressed by the skin dorsal glands.

It localises to the secreted. Antimicrobial peptide. Adopts an alpha helical conformation which can disrupt bacterial membranes. Strongly inhibits the formation of NO by neuronal nitric oxide synthase (nNOS) at micromolar concentrations. Acts by a non-competitive mechanism, probably by binding to calcium/calmodulin and as a consequence blocking calmodulin attachment to nNOS. Functionally, does not show antimicrobial activity. This chain is Caerin-1.6, found in Ranoidea chloris (Red-eyed tree frog).